Consider the following 277-residue polypeptide: Myelin proteolipid protein (277 aa).

The Cytoplasmic portion of the chain corresponds to 1-10 (MGLLECCARC). S-palmitoyl cysteine attachment occurs at residues Cys-6, Cys-7, and Cys-10. A helical membrane pass occupies residues 11–36 (LVGAPFASLVATGLCFFGVALFCGCG). Over 37–59 (HEALTGTEKLIETYFSKNYQDYE) the chain is Extracellular. Residues 60-88 (YLINVIHAFQYVIYGTASFFFLYGALLLA) form a helical membrane-spanning segment. The Cytoplasmic portion of the chain corresponds to 89 to 151 (EGFYTTGAVR…LGKWLGHPDK (63 aa)). Cys-109 carries S-palmitoyl cysteine lipidation. At Ser-114 the chain carries Phosphoserine. Phosphothreonine occurs at positions 116 and 118. S-palmitoyl cysteine attachment occurs at residues Cys-139 and Cys-141. A helical membrane pass occupies residues 152-178 (FVGITYALTVVWLLVFACSAVPVYIYF). The Extracellular segment spans residues 179-238 (NTWTTCQSIAFPSKTSASIGTLCADARMYGVLPWNAFPGKVCGSNLLSICKTAEFQMTFH). Disulfide bonds link Cys-184-Cys-228 and Cys-201-Cys-220. Thr-199 is lipidated: O-palmitoyl threonine. The chain crosses the membrane as a helical span at residues 239-268 (LFIAAFVGAAATLVSLLTFMIAATYNFAVL). Residues 269–277 (KLMGRGTKF) are Cytoplasmic-facing.

Belongs to the myelin proteolipid protein family. In terms of assembly, interacts with MAL.

It is found in the cell membrane. Its subcellular location is the myelin membrane. Functionally, this is the major myelin protein from the central nervous system. It plays an important role in the formation or maintenance of the multilamellar structure of myelin. In Oryctolagus cuniculus (Rabbit), this protein is Myelin proteolipid protein (PLP1).